The chain runs to 188 residues: PRA1 family protein 3 (188 aa).

Methionine 1 is subject to N-acetylmethionine. Residues 1 to 35 lie on the Cytoplasmic side of the membrane; sequence MDVNLAPLRAWDDFFPGSDRFARPDFRDISKWNNR. Helical transmembrane passes span 36–56 and 57–77; these read VVSNLLYYQTNYLVVAAMMIS and VVGFLSPFNMILGGIIVVLVF. Residues 78-92 lie on the Cytoplasmic side of the membrane; the sequence is TGFVWAAHNKDILRR. The next 2 membrane-spanning stretches (helical) occupy residues 93 to 113 and 115 to 135; these read MKKQYPTAFVMVVMLASYFLI and MFGGVMVFVFGITFPLLLMFI. Residues 103–117 are required for homodimer formation and heterodimer formation with ARL6IP1; sequence MVVMLASYFLISMFG. Residues 136 to 188 are Cytoplasmic-facing; sequence HASLRLRNLKNKLENKMEGIGLKKTPMGIILDALEQQEDSINKFADYISKARE. Residues 136-188 are targeting to endoplasmic reticulum membrane; it reads HASLRLRNLKNKLENKMEGIGLKKTPMGIILDALEQQEDSINKFADYISKARE.

This sequence belongs to the PRA1 family. Homodimer. Heterodimer with ARL6IP1. Forms multimers. Interacts with ARL6. Interacts with prenylated RAB1A and RAB3A. Interacts with SLC1A1/EAAC1. Interacts with RTN2 (via first transmembrane domain). Does not interact with VAMP1, VAMP2 or VAMP3. In terms of tissue distribution, ubiquitous. Most abundant in heart and brain. In the embryonic brain cortex, expressed in neurons and astrocytes.

It is found in the endoplasmic reticulum membrane. Its subcellular location is the cell membrane. The protein resides in the cytoplasm. It localises to the cytoskeleton. Regulates intracellular concentrations of taurine and glutamate. Negatively modulates SLC1A1/EAAC1 glutamate transport activity by decreasing its affinity for glutamate in a PKC activity-dependent manner. Plays a role in the retention of SLC1A1/EAAC1 in the endoplasmic reticulum. The polypeptide is PRA1 family protein 3 (Arl6ip5) (Rattus norvegicus (Rat)).